Here is a 690-residue protein sequence, read N- to C-terminus: Guanylate cyclase soluble subunit alpha-1 (690 aa).

A Phosphoserine modification is found at serine 267. The region spanning 481-608 is the Guanylate cyclase domain; that stretch reads TMLFSDIVGF…NNVTLANKFE (128 aa).

This sequence belongs to the adenylyl cyclase class-4/guanylyl cyclase family. In terms of assembly, the active enzyme is formed by a heterodimer of an alpha and a beta subunit. Heterodimer with GUCY1B1. Mg(2+) serves as cofactor. Mn(2+) is required as a cofactor.

The protein localises to the cytoplasm. The enzyme catalyses GTP = 3',5'-cyclic GMP + diphosphate. Its activity is regulated as follows. Activated by nitric oxide in the presence of magnesium or manganese ions. The chain is Guanylate cyclase soluble subunit alpha-1 (GUCY1A1) from Canis lupus familiaris (Dog).